The chain runs to 479 residues: D-aminoacyl-tRNA deacylase (479 aa).

Belongs to the DtdA deacylase family. As to quaternary structure, monomer. The cofactor is Zn(2+).

It carries out the reaction a D-aminoacyl-tRNA + H2O = a tRNA + a D-alpha-amino acid + H(+). It catalyses the reaction glycyl-tRNA(Ala) + H2O = tRNA(Ala) + glycine + H(+). D-aminoacyl-tRNA deacylase with broad substrate specificity. By recycling D-aminoacyl-tRNA to D-amino acids and free tRNA molecules, this enzyme counteracts the toxicity associated with the formation of D-aminoacyl-tRNA entities in vivo. This Methanococcoides burtonii (strain DSM 6242 / NBRC 107633 / OCM 468 / ACE-M) protein is D-aminoacyl-tRNA deacylase.